The primary structure comprises 332 residues: tRNA U34 carboxymethyltransferase (332 aa).

Carboxy-S-adenosyl-L-methionine contacts are provided by residues Lys-96, Trp-110, Lys-115, Gly-135, 186-187 (LE), Met-204, Tyr-208, and Arg-323.

Belongs to the class I-like SAM-binding methyltransferase superfamily. CmoB family. As to quaternary structure, homotetramer.

It carries out the reaction carboxy-S-adenosyl-L-methionine + 5-hydroxyuridine(34) in tRNA = 5-carboxymethoxyuridine(34) in tRNA + S-adenosyl-L-homocysteine + H(+). Catalyzes carboxymethyl transfer from carboxy-S-adenosyl-L-methionine (Cx-SAM) to 5-hydroxyuridine (ho5U) to form 5-carboxymethoxyuridine (cmo5U) at position 34 in tRNAs. The protein is tRNA U34 carboxymethyltransferase of Hydrogenovibrio crunogenus (strain DSM 25203 / XCL-2) (Thiomicrospira crunogena).